Here is a 2219-residue protein sequence, read N- to C-terminus: RNA-directed RNA polymerase L (2219 aa).

Residues 26 to 289 (KLAFLVQTEP…TTEDDVEYLI (264 aa)) form an endonuclease region. 3 residues coordinate Mn(2+): glutamate 51, aspartate 89, and glutamate 102. Lysine 115 is an active-site residue. A RdRp catalytic domain is found at 1177–1373 (LSMKLNVSLA…YMSDQLNKFV (197 aa)). Residue aspartate 1335 coordinates Mg(2+).

The protein belongs to the Bunyavirales RNA polymerase family. As to quaternary structure, homomultimer; the oligomeric structure is essential for the polymerase activity. Interacts with nucleoprotein N. Interacts with protein Z; this interaction inhibits viral transcription and replication, Z partially blocks the product exit tunnel for the releasing nascent RNA product. The cofactor is Mn(2+). Mg(2+) is required as a cofactor.

It is found in the virion. It localises to the host cytoplasm. It carries out the reaction RNA(n) + a ribonucleoside 5'-triphosphate = RNA(n+1) + diphosphate. Functionally, RNA-dependent RNA polymerase, which is responsible for the replication and transcription of the viral RNA genome using antigenomic RNA as an intermediate. During transcription, synthesizes subgenomic RNAs and assures their capping by a cap-snatching mechanism, which involves the endonuclease activity cleaving the host capped pre-mRNAs. These short capped RNAs are then used as primers for viral transcription. The 3'-end of subgenomic mRNAs molecules are heterogeneous and not polyadenylated. The replicase function is to direct synthesis of antigenomic and genomic RNA which are encapsidated and non capped. As a consequence of the use of the same enzyme for both transcription and replication, these mechanisms need to be well coordinated. These processes may be regulated by proteins N and Z in a dose-dependent manner. Z protein inhibits the viral polymerase L und thus the viral transcription and RNA synthesis. This is RNA-directed RNA polymerase L from Homo sapiens (Human).